The sequence spans 89 residues: Putative antitoxin VapB42 (89 aa).

In terms of biological role, possibly the antitoxin component of a type II toxin-antitoxin (TA) system. Its cognate toxin is VapC42 (Potential). In Mycobacterium tuberculosis (strain CDC 1551 / Oshkosh), this protein is Putative antitoxin VapB42 (vapB42).